We begin with the raw amino-acid sequence, 202 residues long: Na(+)-translocating NADH-quinone reductase subunit E (202 aa).

6 helical membrane-spanning segments follow: residues 11–31 (SIFI…YLAV), 39–59 (MGLG…NNLL), 79–99 (LTFV…QILE), 114–134 (GIFL…LFMV), 144–164 (VTFG…LAGI), and 180–200 (LGIT…FSGI).

Belongs to the NqrDE/RnfAE family. In terms of assembly, composed of six subunits; NqrA, NqrB, NqrC, NqrD, NqrE and NqrF.

Its subcellular location is the cell inner membrane. The catalysed reaction is a ubiquinone + n Na(+)(in) + NADH + H(+) = a ubiquinol + n Na(+)(out) + NAD(+). Its function is as follows. NQR complex catalyzes the reduction of ubiquinone-1 to ubiquinol by two successive reactions, coupled with the transport of Na(+) ions from the cytoplasm to the periplasm. NqrA to NqrE are probably involved in the second step, the conversion of ubisemiquinone to ubiquinol. The sequence is that of Na(+)-translocating NADH-quinone reductase subunit E from Maridesulfovibrio salexigens (strain ATCC 14822 / DSM 2638 / NCIMB 8403 / VKM B-1763) (Desulfovibrio salexigens).